A 331-amino-acid polypeptide reads, in one-letter code: CRISPR-associated endonuclease Cas1 1 (331 aa).

Residues E161, H226, and E241 each contribute to the Mn(2+) site.

It belongs to the CRISPR-associated endonuclease Cas1 family. In terms of assembly, homodimer, forms a heterotetramer with a Cas2 homodimer. Requires Mg(2+) as cofactor. Mn(2+) is required as a cofactor.

CRISPR (clustered regularly interspaced short palindromic repeat), is an adaptive immune system that provides protection against mobile genetic elements (viruses, transposable elements and conjugative plasmids). CRISPR clusters contain spacers, sequences complementary to antecedent mobile elements, and target invading nucleic acids. CRISPR clusters are transcribed and processed into CRISPR RNA (crRNA). Acts as a dsDNA endonuclease. Involved in the integration of spacer DNA into the CRISPR cassette. In Methanospirillum hungatei JF-1 (strain ATCC 27890 / DSM 864 / NBRC 100397 / JF-1), this protein is CRISPR-associated endonuclease Cas1 1.